The chain runs to 225 residues: Interleukin-6 (225 aa).

The signal sequence occupies residues 1–24; it reads MPSRLNVFWLCAAALAALLRCAPA. N-linked (GlcNAc...) asparagine glycosylation occurs at Asn-98.

The protein belongs to the IL-6 superfamily. In terms of assembly, component of a hexamer of two molecules each of IL6, IL6R and IL6ST; first binds to IL6R to associate with the signaling subunit IL6ST. Expressed in white muscle, skin, spleen, anterior intestine and stomach. Not expressed in brain, gill, head kidney, posterior intestine and adipose tissue.

It is found in the secreted. Functionally, cytokine with a wide variety of biological functions in immunity, tissue regeneration, and metabolism. Binds to IL6R, then the complex associates to the signaling subunit IL6ST/gp130 to trigger the intracellular IL6-signaling pathway. The interaction with the membrane-bound IL6R and IL6ST stimulates 'classic signaling', whereas the binding of IL6 and soluble IL6R to IL6ST stimulates 'trans-signaling'. Alternatively, 'cluster signaling' occurs when membrane-bound IL6:IL6R complexes on transmitter cells activate IL6ST receptors on neighboring receiver cells. This is Interleukin-6 (il6) from Sparus aurata (Gilthead sea bream).